Consider the following 300-residue polypeptide: UDP-3-O-acyl-N-acetylglucosamine deacetylase (300 aa).

Zn(2+) contacts are provided by histidine 78, histidine 237, and aspartate 241. Histidine 264 serves as the catalytic Proton donor.

The protein belongs to the LpxC family. Zn(2+) is required as a cofactor.

The catalysed reaction is a UDP-3-O-[(3R)-3-hydroxyacyl]-N-acetyl-alpha-D-glucosamine + H2O = a UDP-3-O-[(3R)-3-hydroxyacyl]-alpha-D-glucosamine + acetate. Its pathway is glycolipid biosynthesis; lipid IV(A) biosynthesis; lipid IV(A) from (3R)-3-hydroxytetradecanoyl-[acyl-carrier-protein] and UDP-N-acetyl-alpha-D-glucosamine: step 2/6. In terms of biological role, catalyzes the hydrolysis of UDP-3-O-myristoyl-N-acetylglucosamine to form UDP-3-O-myristoylglucosamine and acetate, the committed step in lipid A biosynthesis. The protein is UDP-3-O-acyl-N-acetylglucosamine deacetylase of Acinetobacter baumannii (strain ATCC 17978 / DSM 105126 / CIP 53.77 / LMG 1025 / NCDC KC755 / 5377).